The sequence spans 155 residues: Ribosome maturation factor RimP (155 aa).

It belongs to the RimP family.

Its subcellular location is the cytoplasm. Functionally, required for maturation of 30S ribosomal subunits. The chain is Ribosome maturation factor RimP from Bacteroides thetaiotaomicron (strain ATCC 29148 / DSM 2079 / JCM 5827 / CCUG 10774 / NCTC 10582 / VPI-5482 / E50).